The chain runs to 318 residues: tRNA-modifying protein YgfZ (318 aa).

Residues Trp28 and Trp182 each contribute to the folate site.

The protein belongs to the tRNA-modifying YgfZ family.

It is found in the cytoplasm. Its function is as follows. Folate-binding protein involved in regulating the level of ATP-DnaA and in the modification of some tRNAs. It is probably a key factor in regulatory networks that act via tRNA modification, such as initiation of chromosomal replication. This chain is tRNA-modifying protein YgfZ, found in Aliivibrio fischeri (strain ATCC 700601 / ES114) (Vibrio fischeri).